A 504-amino-acid polypeptide reads, in one-letter code: Putative glycerol-3-phosphate transporter 2 (504 aa).

12 helical membrane-spanning segments follow: residues 31–51, 84–104, 116–136, 145–165, 178–198, 210–230, 280–302, 324–344, 352–372, 378–398, 424–444, and 452–472; these read LSFK…YIAF, ALLG…MFVA, FLTI…VAFW, FLAV…CIVA, MIMG…SLIA, FLGP…FLPV, IPGV…TFLY, GNLS…AGYI, AITA…YRVF, TINV…FALI, AIID…TGYI, and VFYM…KLII.

The protein belongs to the major facilitator superfamily. Organophosphate:Pi antiporter (OPA) (TC 2.A.1.4) family. As to expression, expressed in the root-hair differentiation zone.

The protein resides in the membrane. This chain is Putative glycerol-3-phosphate transporter 2, found in Arabidopsis thaliana (Mouse-ear cress).